A 496-amino-acid polypeptide reads, in one-letter code: NADP-dependent glyceraldehyde-3-phosphate dehydrogenase (496 aa).

Substrate is bound by residues R116 and 169 to 170 (NY). NADP(+)-binding residues include K192, T195, and D230. 245–249 (GGDTG) lines the NAD(+) pocket. The active-site Proton acceptor is the E264. Position 297-299 (297-299 (RCT)) interacts with substrate. The Nucleophile role is filled by C298. An NADP(+)-binding site is contributed by E391. R451 contributes to the substrate binding site.

Belongs to the aldehyde dehydrogenase family.

It is found in the cytoplasm. It catalyses the reaction D-glyceraldehyde 3-phosphate + NADP(+) + H2O = (2R)-3-phosphoglycerate + NADPH + 2 H(+). Important as a means of generating NADPH for biosynthetic reactions. This Nicotiana plumbaginifolia (Leadwort-leaved tobacco) protein is NADP-dependent glyceraldehyde-3-phosphate dehydrogenase (GAPN).